We begin with the raw amino-acid sequence, 504 residues long: Maturase K (504 aa).

It belongs to the intron maturase 2 family. MatK subfamily.

It is found in the plastid. The protein localises to the chloroplast. Usually encoded in the trnK tRNA gene intron. Probably assists in splicing its own and other chloroplast group II introns. In Vauquelinia californica (Arizona rosewood), this protein is Maturase K.